Here is a 79-residue protein sequence, read N- to C-terminus: Biotin synthase auxiliary protein (79 aa).

It belongs to the BsaP family. Requires iron-sulfur cluster as cofactor.

Functionally, required for the activity of the biotin synthase BioB. This chain is Biotin synthase auxiliary protein, found in Mycobacterium bovis (strain ATCC BAA-935 / AF2122/97).